Here is a 330-residue protein sequence, read N- to C-terminus: Protein qutG (330 aa).

Mg(2+) contacts are provided by glutamate 78, aspartate 100, leucine 102, aspartate 103, and aspartate 251. Substrate is bound at residue glutamate 78. Substrate is bound by residues 102–105 and aspartate 251; that span reads LDGT.

The protein belongs to the inositol monophosphatase superfamily.

Not known. Probably involved in quinate metabolism. This chain is Protein qutG (qutG), found in Emericella nidulans (strain FGSC A4 / ATCC 38163 / CBS 112.46 / NRRL 194 / M139) (Aspergillus nidulans).